The sequence spans 245 residues: MPRTEPRVELLAHTPEPLSLLYAAFRQCYHAGFVADMWPRLLSGEIEREKQGAFIASILESGHSSPIEHVSFTFAIEGVSRALTHQLVRHRIASFSQQSQRYVDGSHFDYVMPPAIARNAAAKARFEQFMEDVGSAYRDIKALLEQDGRTGSRANEDARFVLPQAAASKIVVTMNCRALVHFFEERCCMRAQWEIRAVADVMLGLCREVLPELFAHAGAKCERLGYCPEGERFTCGRYPLRQSMP.

One can recognise a ThyX domain in the interval 6 to 220; that stretch reads PRVELLAHTP…PELFAHAGAK (215 aa). FAD contacts are provided by residues serine 65, 89–91, and glutamine 97; that span reads RHR. DUMP-binding positions include 86 to 89, 97 to 101, and arginine 159; these read QLVR and QQSQR. Positions 89 to 99 match the ThyX motif motif; it reads RHRIASFSQQS. Residues 175 to 177 and histidine 181 each bind FAD; that span reads NCR. Arginine 186 contacts dUMP. The active-site Involved in ionization of N3 of dUMP, leading to its activation is arginine 186.

This sequence belongs to the thymidylate synthase ThyX family. In terms of assembly, homotetramer. The cofactor is FAD.

The enzyme catalyses dUMP + (6R)-5,10-methylene-5,6,7,8-tetrahydrofolate + NADPH + H(+) = dTMP + (6S)-5,6,7,8-tetrahydrofolate + NADP(+). It functions in the pathway pyrimidine metabolism; dTTP biosynthesis. Catalyzes the reductive methylation of 2'-deoxyuridine-5'-monophosphate (dUMP) to 2'-deoxythymidine-5'-monophosphate (dTMP) while utilizing 5,10-methylenetetrahydrofolate (mTHF) as the methyl donor, and NADPH and FADH(2) as the reductant. The protein is Flavin-dependent thymidylate synthase of Nitratidesulfovibrio vulgaris (strain ATCC 29579 / DSM 644 / CCUG 34227 / NCIMB 8303 / VKM B-1760 / Hildenborough) (Desulfovibrio vulgaris).